We begin with the raw amino-acid sequence, 81 residues long: Exodeoxyribonuclease 7 small subunit (81 aa).

It belongs to the XseB family. Heterooligomer composed of large and small subunits.

It localises to the cytoplasm. The enzyme catalyses Exonucleolytic cleavage in either 5'- to 3'- or 3'- to 5'-direction to yield nucleoside 5'-phosphates.. Its function is as follows. Bidirectionally degrades single-stranded DNA into large acid-insoluble oligonucleotides, which are then degraded further into small acid-soluble oligonucleotides. This chain is Exodeoxyribonuclease 7 small subunit, found in Pasteurella multocida (strain Pm70).